The primary structure comprises 1089 residues: Probable transport protein MmpL8 (1089 aa).

Residues Met1–Thr26 form a disordered region. The next 12 membrane-spanning stretches (helical) occupy residues Trp44–Leu64, Ile222–Leu242, Leu257–Ser277, Ile316–Phe336, Leu349–Val369, Lys400–Ala420, Ala555–Gly575, Ile874–Val894, Tyr898–Phe918, Ile930–Ile950, Gly973–Ala993, and Gly996–Val1016. The tract at residues Arg1056–Leu1078 is disordered. Residues Glu1066–Leu1078 are compositionally biased toward acidic residues.

This sequence belongs to the resistance-nodulation-cell division (RND) (TC 2.A.6) family. MmpL subfamily.

It localises to the cell membrane. This Mycobacterium bovis (strain ATCC BAA-935 / AF2122/97) protein is Probable transport protein MmpL8 (mmpL8).